Here is a 426-residue protein sequence, read N- to C-terminus: Histidine--tRNA ligase 1 (426 aa).

It belongs to the class-II aminoacyl-tRNA synthetase family. Homodimer.

It localises to the cytoplasm. The enzyme catalyses tRNA(His) + L-histidine + ATP = L-histidyl-tRNA(His) + AMP + diphosphate + H(+). The chain is Histidine--tRNA ligase 1 from Bacillus cereus (strain ATCC 14579 / DSM 31 / CCUG 7414 / JCM 2152 / NBRC 15305 / NCIMB 9373 / NCTC 2599 / NRRL B-3711).